Here is a 121-residue protein sequence, read N- to C-terminus: Large ribosomal subunit protein uL18 (121 aa).

The span at 1-22 (MIKKPDKKTLRQGKHKRVRRKV) shows a compositional bias: basic residues. Residues 1–23 (MIKKPDKKTLRQGKHKRVRRKVA) form a disordered region.

This sequence belongs to the universal ribosomal protein uL18 family. Part of the 50S ribosomal subunit; part of the 5S rRNA/L5/L18/L25 subcomplex. Contacts the 5S and 23S rRNAs.

Functionally, this is one of the proteins that bind and probably mediate the attachment of the 5S RNA into the large ribosomal subunit, where it forms part of the central protuberance. The chain is Large ribosomal subunit protein uL18 from Syntrophomonas wolfei subsp. wolfei (strain DSM 2245B / Goettingen).